A 255-amino-acid polypeptide reads, in one-letter code: tRNA (guanine-N(1)-)-methyltransferase (255 aa).

Residues Gly-112 and 131–136 (LGDYVL) contribute to the S-adenosyl-L-methionine site.

Belongs to the RNA methyltransferase TrmD family. In terms of assembly, homodimer.

It localises to the cytoplasm. It catalyses the reaction guanosine(37) in tRNA + S-adenosyl-L-methionine = N(1)-methylguanosine(37) in tRNA + S-adenosyl-L-homocysteine + H(+). Specifically methylates guanosine-37 in various tRNAs. The polypeptide is tRNA (guanine-N(1)-)-methyltransferase (Lacticaseibacillus paracasei (strain ATCC 334 / BCRC 17002 / CCUG 31169 / CIP 107868 / KCTC 3260 / NRRL B-441) (Lactobacillus paracasei)).